Consider the following 429-residue polypeptide: Histidine--tRNA ligase (429 aa).

The protein belongs to the class-II aminoacyl-tRNA synthetase family. As to quaternary structure, homodimer.

It localises to the cytoplasm. It carries out the reaction tRNA(His) + L-histidine + ATP = L-histidyl-tRNA(His) + AMP + diphosphate + H(+). The sequence is that of Histidine--tRNA ligase from Pseudomonas aeruginosa (strain UCBPP-PA14).